The sequence spans 31 residues: Cyclotide vico-B (31 aa).

A cross-link (cyclopeptide (Gly-Asn)) is located at residues 1-31 (GSIPCAESCVYIPCITGIAGCSCKNKVCYYN). Cystine bridges form between C5-C21, C9-C23, and C14-C28.

Belongs to the cyclotide family. Bracelet subfamily. In terms of processing, this is a cyclic peptide.

Probably participates in a plant defense mechanism. This chain is Cyclotide vico-B, found in Viola cotyledon (Violeta).